The following is a 240-amino-acid chain: Uridylate kinase (240 aa).

13–16 (KASG) contacts ATP. Positions 21–26 (GSQGFG) are involved in allosteric activation by GTP. Gly-55 lines the UMP pocket. ATP-binding residues include Gly-56 and Arg-60. Residues Asp-75 and 136 to 143 (TGNPFFTT) each bind UMP. ATP-binding residues include Thr-163, Gln-164, Tyr-169, and Asp-172.

Belongs to the UMP kinase family. Homohexamer.

It localises to the cytoplasm. The catalysed reaction is UMP + ATP = UDP + ADP. It participates in pyrimidine metabolism; CTP biosynthesis via de novo pathway; UDP from UMP (UMPK route): step 1/1. Its activity is regulated as follows. Allosterically activated by GTP. Inhibited by UTP. Functionally, catalyzes the reversible phosphorylation of UMP to UDP. In Rhizobium meliloti (strain 1021) (Ensifer meliloti), this protein is Uridylate kinase.